Here is a 487-residue protein sequence, read N- to C-terminus: NADH-quinone oxidoreductase subunit N (487 aa).

A run of 14 helical transmembrane segments spans residues 16–36 (VIMP…VNVF), 45–65 (LAWL…TGWG), 79–99 (NFAI…VLIS), 111–131 (GELY…AAAT), 133–153 (LMTI…LAGF), 168–188 (FLLG…IYGV), 212–232 (LLIG…AAPF), 257–276 (AAGF…AMIA), 281–298 (LLWI…FTAL), 306–326 (MLAY…ASGT), 333–353 (ILFY…VIVL), 378–398 (ALAM…AGFI), 413–435 (IWLA…RVIV), and 457–477 (LALV…SMIL).

The protein belongs to the complex I subunit 2 family. In terms of assembly, NDH-1 is composed of 14 different subunits. Subunits NuoA, H, J, K, L, M, N constitute the membrane sector of the complex.

Its subcellular location is the cell inner membrane. It catalyses the reaction a quinone + NADH + 5 H(+)(in) = a quinol + NAD(+) + 4 H(+)(out). NDH-1 shuttles electrons from NADH, via FMN and iron-sulfur (Fe-S) centers, to quinones in the respiratory chain. The immediate electron acceptor for the enzyme in this species is believed to be ubiquinone. Couples the redox reaction to proton translocation (for every two electrons transferred, four hydrogen ions are translocated across the cytoplasmic membrane), and thus conserves the redox energy in a proton gradient. This chain is NADH-quinone oxidoreductase subunit N, found in Trichlorobacter lovleyi (strain ATCC BAA-1151 / DSM 17278 / SZ) (Geobacter lovleyi).